Here is a 220-residue protein sequence, read N- to C-terminus: Probable septum site-determining protein MinC (220 aa).

The protein belongs to the MinC family. In terms of assembly, interacts with MinD and FtsZ.

Functionally, cell division inhibitor that blocks the formation of polar Z ring septums. Rapidly oscillates between the poles of the cell to destabilize FtsZ filaments that have formed before they mature into polar Z rings. Prevents FtsZ polymerization. The sequence is that of Probable septum site-determining protein MinC from Vibrio vulnificus (strain CMCP6).